Reading from the N-terminus, the 230-residue chain is 7-cyano-7-deazaguanine synthase (230 aa).

Residue 8-18 (LSGGMDSAVVT) participates in ATP binding. 4 residues coordinate Zn(2+): Cys186, Cys196, Cys199, and Cys202.

This sequence belongs to the QueC family. It depends on Zn(2+) as a cofactor.

It carries out the reaction 7-carboxy-7-deazaguanine + NH4(+) + ATP = 7-cyano-7-deazaguanine + ADP + phosphate + H2O + H(+). It participates in purine metabolism; 7-cyano-7-deazaguanine biosynthesis. Functionally, catalyzes the ATP-dependent conversion of 7-carboxy-7-deazaguanine (CDG) to 7-cyano-7-deazaguanine (preQ(0)). This is 7-cyano-7-deazaguanine synthase from Xylella fastidiosa (strain 9a5c).